The primary structure comprises 437 residues: Vasoactive intestinal polypeptide receptor 2 (437 aa).

The N-terminal stretch at 1–22 (MRASVVLTCYCWLLVRVSSIHP) is a signal peptide. Over 23 to 123 (ECRFHLEIQE…EDESKITFYI (101 aa)) the chain is Extracellular. Cystine bridges form between Cys37/Cys60, Cys51/Cys92, and Cys74/Cys108. N-linked (GlcNAc...) asparagine glycans are attached at residues Asn57, Asn87, and Asn91. The chain crosses the membrane as a helical span at residues 124–149 (LVKAIYTLGYSVSLMSLTTGSIIICL). At 150–157 (FRKLHCTR) the chain is on the cytoplasmic side. The chain crosses the membrane as a helical span at residues 158-179 (NYIHLNLFLSFMLRAISVLVKD). Residues 180–202 (SVLYSSSGTLRCHDQPGSWVGCK) lie on the Extracellular side of the membrane. A disulfide bridge links Cys201 with Cys270. Residues 203–227 (LSLVFFQYCIMANFYWLLVEGLYLH) form a helical membrane-spanning segment. Over 228–238 (TLLVAILPPSR) the chain is Cytoplasmic. The chain crosses the membrane as a helical span at residues 239-260 (CFLAYLLIGWGIPSVCIGAWIA). Over 261-279 (TRLSLEDTGCWDTNDHSIP) the chain is Extracellular. Residues 280-303 (WWVIRMPILISIVVNFALFISIVR) form a helical membrane-spanning segment. At 304-324 (ILLQKLTSPDVGGNDQSQYKR) the chain is on the cytoplasmic side. The helical transmembrane segment at 325–345 (LAKSTLLLIPLFGVHYMVFAA) threads the bilayer. The Extracellular segment spans residues 346 to 353 (FPIGISST). Residues 354–377 (YQILFELCVGSFQGLVVAVLYCFL) form a helical membrane-spanning segment. Over 378–437 (NSEVQCELKRRWRGLCLTQPGSRDYRLHSWSMSRNGSESALQIHRGSRTQSFLQSETSVI) the chain is Cytoplasmic.

The protein belongs to the G-protein coupled receptor 2 family. As to quaternary structure, interacts with ADCYAP1/PACAP (via N-terminal extracellular domain); activated by PACAP27 and CAPAC38 neuropeptides. Interacts with VIP; the interaction results in VIPR1 activation. As to expression, mainly in the thalamus, hippocampus and in the suprachiasmatic nucleus.

It is found in the cell membrane. In terms of biological role, g protein-coupled receptor activated by the neuropeptides vasoactive intestinal peptide (VIP) and pituitary adenylate cyclase-activating polypeptide (ADCYAP1/PACAP). Binds VIP and both PACAP27 and PACAP38 bioactive peptides with the order of ligand affinity of VIP = PACAP38 &gt; PACAP27. Ligand binding causes a conformation change that triggers signaling via guanine nucleotide-binding proteins (G proteins) and modulates the activity of downstream effectors. Activates cAMP-dependent pathway. May be coupled to phospholipase C. The protein is Vasoactive intestinal polypeptide receptor 2 of Rattus norvegicus (Rat).